Here is a 355-residue protein sequence, read N- to C-terminus: 3-dehydroquinate synthase (355 aa).

Residues 98 to 102, 122 to 123, Lys-135, Lys-144, and 162 to 165 each bind NAD(+); these read GVVGD, TT, and TLDT. Zn(2+)-binding residues include Glu-177, His-240, and His-257.

The protein belongs to the sugar phosphate cyclases superfamily. Dehydroquinate synthase family. Co(2+) is required as a cofactor. It depends on Zn(2+) as a cofactor. Requires NAD(+) as cofactor.

The protein resides in the cytoplasm. It catalyses the reaction 7-phospho-2-dehydro-3-deoxy-D-arabino-heptonate = 3-dehydroquinate + phosphate. It participates in metabolic intermediate biosynthesis; chorismate biosynthesis; chorismate from D-erythrose 4-phosphate and phosphoenolpyruvate: step 2/7. In terms of biological role, catalyzes the conversion of 3-deoxy-D-arabino-heptulosonate 7-phosphate (DAHP) to dehydroquinate (DHQ). In Dictyoglomus turgidum (strain DSM 6724 / Z-1310), this protein is 3-dehydroquinate synthase.